Consider the following 424-residue polypeptide: Homoserine O-succinyltransferase (424 aa).

The region spanning 67–381 (NAVLVCHALN…PHGHDAFLLD (315 aa)) is the AB hydrolase-1 domain. The active-site Nucleophile is serine 173. Substrate is bound at residue arginine 243. Active-site residues include aspartate 342 and histidine 375. Residue aspartate 376 coordinates substrate.

It belongs to the AB hydrolase superfamily. MetX family. As to quaternary structure, homodimer.

The protein localises to the cytoplasm. It catalyses the reaction L-homoserine + succinyl-CoA = O-succinyl-L-homoserine + CoA. Its pathway is amino-acid biosynthesis; L-methionine biosynthesis via de novo pathway; O-succinyl-L-homoserine from L-homoserine: step 1/1. Its function is as follows. Transfers a succinyl group from succinyl-CoA to L-homoserine, forming succinyl-L-homoserine. In vitro, also has serine succinyl transferase activity. This is Homoserine O-succinyltransferase from Bordetella petrii (strain ATCC BAA-461 / DSM 12804 / CCUG 43448).